The sequence spans 248 residues: MSFYRSSIISQIIKYNRRLAKSIICEDDSQIITLTAFVNQCLWCHKRVSVSAILLTTDNKILVCNRRDSFLYSEIIRTRNMYRKKRLFLNYSNYLNKQERSILSSFFSLDPATADNDRINAIYPGGIPKRGENVPECLSREIKEEVNIDNSFVFIDTRFFIHGIIEDTIINKFFEVIFFVGRISLTSDQIIDTFKSNHEIKDLIFLDPNSGNGLQYEIAKYALDTAKLKCYGHRGCYYESLKKLTEDD.

The Nudix hydrolase domain maps to 45–227 (HKRVSVSAIL…IAKYALDTAK (183 aa)). The Nudix box signature appears at 125–147 (GGIPKRGENVPECLSREIKEEVN).

It belongs to the Nudix hydrolase family. In terms of assembly, interacts with the late transcription elongation factor VLTF-4/OPG110. Interacts with the late transcription factors VLTF-1. Mg(2+) is required as a cofactor. It depends on Mn(2+) as a cofactor.

The protein localises to the host mitochondrion. Functionally, acts with RNA polymerase to initiate transcription from late gene promoters. In Cynomys gunnisoni (Gunnison's prairie dog), this protein is mRNA-decapping protein OPG122 (OPG122).